Consider the following 1345-residue polypeptide: DNA-directed RNA polymerase subunit beta' (1345 aa).

Residues cysteine 60, cysteine 62, cysteine 75, and cysteine 78 each coordinate Zn(2+). Residues aspartate 536, aspartate 538, and aspartate 540 each coordinate Mg(2+). Residues cysteine 895, cysteine 974, cysteine 981, and cysteine 984 each contribute to the Zn(2+) site. The interval 1325-1345 (DDNDNPVDFGDEFRIDPDELK) is disordered. Positions 1335-1345 (DEFRIDPDELK) are enriched in basic and acidic residues.

The protein belongs to the RNA polymerase beta' chain family. In terms of assembly, the RNAP catalytic core consists of 2 alpha, 1 beta, 1 beta' and 1 omega subunit. When a sigma factor is associated with the core the holoenzyme is formed, which can initiate transcription. Mg(2+) serves as cofactor. Requires Zn(2+) as cofactor.

It catalyses the reaction RNA(n) + a ribonucleoside 5'-triphosphate = RNA(n+1) + diphosphate. Its function is as follows. DNA-dependent RNA polymerase catalyzes the transcription of DNA into RNA using the four ribonucleoside triphosphates as substrates. The chain is DNA-directed RNA polymerase subunit beta' from Bifidobacterium animalis subsp. lactis (strain AD011).